Consider the following 947-residue polypeptide: Isoleucine--tRNA ligase (947 aa).

The short motif at 57-67 (PYANGNIHLGH) is the 'HIGH' region element. Glu568 serves as a coordination point for L-isoleucyl-5'-AMP. The 'KMSKS' region motif lies at 609-613 (KMSKS). Lys612 lines the ATP pocket. Zn(2+) is bound by residues Cys908, Cys911, Cys926, and Cys929.

Belongs to the class-I aminoacyl-tRNA synthetase family. IleS type 1 subfamily. In terms of assembly, monomer. Zn(2+) serves as cofactor.

It is found in the cytoplasm. The enzyme catalyses tRNA(Ile) + L-isoleucine + ATP = L-isoleucyl-tRNA(Ile) + AMP + diphosphate. Functionally, catalyzes the attachment of isoleucine to tRNA(Ile). As IleRS can inadvertently accommodate and process structurally similar amino acids such as valine, to avoid such errors it has two additional distinct tRNA(Ile)-dependent editing activities. One activity is designated as 'pretransfer' editing and involves the hydrolysis of activated Val-AMP. The other activity is designated 'posttransfer' editing and involves deacylation of mischarged Val-tRNA(Ile). This is Isoleucine--tRNA ligase from Persephonella marina (strain DSM 14350 / EX-H1).